The chain runs to 186 residues: Trafficking protein particle complex subunit 5 (186 aa).

It belongs to the TRAPP small subunits family. BET3 subfamily. In terms of assembly, part of the multisubunit TRAPP (transport protein particle) complex.

It localises to the golgi apparatus. It is found in the cis-Golgi network. The protein resides in the endoplasmic reticulum. Its function is as follows. May play a role in vesicular transport from endoplasmic reticulum to Golgi. The polypeptide is Trafficking protein particle complex subunit 5 (trappc5) (Dictyostelium discoideum (Social amoeba)).